Consider the following 237-residue polypeptide: Orotate phosphoribosyltransferase (237 aa).

Lysine 29 is a binding site for 5-phospho-alpha-D-ribose 1-diphosphate. 37-38 provides a ligand contact to orotate; sequence FF. Residues 79–80, arginine 105, lysine 106, lysine 109, histidine 111, and 130–138 each bind 5-phospho-alpha-D-ribose 1-diphosphate; these read YK and DDVMSAGTA. Orotate is bound by residues serine 134 and arginine 162.

This sequence belongs to the purine/pyrimidine phosphoribosyltransferase family. PyrE subfamily. Homodimer. Mg(2+) is required as a cofactor.

The catalysed reaction is orotidine 5'-phosphate + diphosphate = orotate + 5-phospho-alpha-D-ribose 1-diphosphate. The protein operates within pyrimidine metabolism; UMP biosynthesis via de novo pathway; UMP from orotate: step 1/2. Its function is as follows. Catalyzes the transfer of a ribosyl phosphate group from 5-phosphoribose 1-diphosphate to orotate, leading to the formation of orotidine monophosphate (OMP). This is Orotate phosphoribosyltransferase from Polaromonas naphthalenivorans (strain CJ2).